Reading from the N-terminus, the 264-residue chain is S-adenosylmethionine decarboxylase proenzyme (264 aa).

Serine 112 acts as the Schiff-base intermediate with substrate; via pyruvic acid in catalysis. The residue at position 112 (serine 112) is a Pyruvic acid (Ser); by autocatalysis. The active-site Proton acceptor; for processing activity is histidine 117. Cysteine 140 acts as the Proton donor; for catalytic activity in catalysis.

The protein belongs to the prokaryotic AdoMetDC family. Type 2 subfamily. As to quaternary structure, heterooctamer of four alpha and four beta chains arranged as a tetramer of alpha/beta heterodimers. The cofactor is pyruvate. Post-translationally, is synthesized initially as an inactive proenzyme. Formation of the active enzyme involves a self-maturation process in which the active site pyruvoyl group is generated from an internal serine residue via an autocatalytic post-translational modification. Two non-identical subunits are generated from the proenzyme in this reaction, and the pyruvate is formed at the N-terminus of the alpha chain, which is derived from the carboxyl end of the proenzyme. The post-translation cleavage follows an unusual pathway, termed non-hydrolytic serinolysis, in which the side chain hydroxyl group of the serine supplies its oxygen atom to form the C-terminus of the beta chain, while the remainder of the serine residue undergoes an oxidative deamination to produce ammonia and the pyruvoyl group blocking the N-terminus of the alpha chain.

It catalyses the reaction S-adenosyl-L-methionine + H(+) = S-adenosyl 3-(methylsulfanyl)propylamine + CO2. The protein operates within amine and polyamine biosynthesis; S-adenosylmethioninamine biosynthesis; S-adenosylmethioninamine from S-adenosyl-L-methionine: step 1/1. Catalyzes the decarboxylation of S-adenosylmethionine to S-adenosylmethioninamine (dcAdoMet), the propylamine donor required for the synthesis of the polyamines spermine and spermidine from the diamine putrescine. This Sodalis glossinidius (strain morsitans) protein is S-adenosylmethionine decarboxylase proenzyme.